The following is a 1036-amino-acid chain: Protein CLEC16A (1036 aa).

In terms of domain architecture, FPL spans 51–198 (IRSITEILIW…AVRTITLNVY (148 aa)). Disordered regions lie at residues 375-416 (SLEM…DAEK), 437-458 (GTSV…NSEN), 876-967 (HSSP…PSLL), and 1008-1036 (SQLP…PTEH). A compositionally biased stretch (basic residues) spans 381-392 (HKGKKRMQKRPN). 3 stretches are compositionally biased toward low complexity: residues 877 to 891 (SSPS…FASG), 898 to 923 (STSH…APTT), and 943 to 954 (NSKPSKNSSARS).

It belongs to the CLEC16A/gop-1 family. Interacts with RNF41/NRDP1. In terms of tissue distribution, ubiquitously expressed. Expressed in pancreatic islets.

It localises to the endosome membrane. The protein localises to the lysosome membrane. Its function is as follows. Regulator of mitophagy through the upstream regulation of the RNF41/NRDP1-PRKN pathway. Mitophagy is a selective form of autophagy necessary for mitochondrial quality control. The RNF41/NRDP1-PRKN pathway regulates autophagosome-lysosome fusion during late mitophagy. May protect RNF41/NRDP1 from proteasomal degradation, RNF41/NRDP1 which regulates proteasomal degradation of PRKN. Plays a key role in beta cells functions by regulating mitophagy/autophagy and mitochondrial health. The chain is Protein CLEC16A from Mus musculus (Mouse).